The following is a 919-amino-acid chain: Kinesin-like protein KIN-UA (919 aa).

The disordered stretch occupies residues 1 to 68 (MSTTSGTGGV…SGGGGDAGVP (68 aa)). Positions 15-51 (GTQRSSLRTQSSASTSSGGQKASVKSKSVLRKSSPAA) are enriched in low complexity. The span at 52-66 (LGGGSSKSGGGGDAG) shows a compositional bias: gly residues. The 343-residue stretch at 70–412 (RVRVAVRLRP…IMFGQRAMKV (343 aa)) folds into the Kinesin motor domain. 155–162 (GQTGTGKT) contributes to the ATP binding site. The tract at residues 286–305 (TRDGLSSESNGNSHMTKSLK) is disordered. Polar residues predominate over residues 291–301 (SSESNGNSHMT). Residues 382-390 (RTSLVITIG) carry the D-BOX motif. 2 coiled-coil regions span residues 428 to 492 (SRRL…SIKK) and 530 to 621 (ALEE…LEQH). ARM repeat units lie at residues 650–689 (KPPVARLFEQVGLQKILSLLEAEDADVRIHAVKVVANLAA), 691–731 (EANQ…NLAM), 733–773 (ETNQ…NLCG), and 775–814 (DKLQTKLRSEGGIAALLGMVRCGHPDVLAQVARGIANFAK).

Belongs to the TRAFAC class myosin-kinesin ATPase superfamily. Kinesin family. Ungrouped subfamily. As to quaternary structure, interacts (via C-terminus) with NEK5. As to expression, expressed in leaves, guard cells, trichomes, vascular tissues, stele of the root tip region and columella cells. Highest expression detected in guard cells.

It localises to the cytoplasm. The protein resides in the cytoskeleton. The protein is Kinesin-like protein KIN-UA of Arabidopsis thaliana (Mouse-ear cress).